A 168-amino-acid chain; its full sequence is uncharacterized protein (168 aa).

4Fe-4S ferredoxin-type domains are found at residues 48-78 and 91-122; these read KIPK…MIPI and KIPK…ISPI. Residues C58, C61, C64, C68, C100, C103, C106, and C110 each coordinate [4Fe-4S] cluster.

This is an uncharacterized protein from Methanocaldococcus jannaschii (strain ATCC 43067 / DSM 2661 / JAL-1 / JCM 10045 / NBRC 100440) (Methanococcus jannaschii).